A 1160-amino-acid chain; its full sequence is DNA polymerase III subunit alpha (1160 aa).

Its subcellular location is the cytoplasm. The catalysed reaction is DNA(n) + a 2'-deoxyribonucleoside 5'-triphosphate = DNA(n+1) + diphosphate. In terms of biological role, DNA polymerase III is a complex, multichain enzyme responsible for most of the replicative synthesis in bacteria. This DNA polymerase also exhibits 3' to 5' exonuclease activity. The alpha chain is the DNA polymerase. The chain is DNA polymerase III subunit alpha (dnaE) from Escherichia coli O6:H1 (strain CFT073 / ATCC 700928 / UPEC).